A 476-amino-acid chain; its full sequence is Viral inhibitor of caspase-8-induced apoptosis (476 aa).

The protein belongs to the herpesviridae US22 family. As to quaternary structure, interacts with host pro-caspase-8/CASP8; this interaction inhibits CASP8 activation.

Functionally, plays a role in the inhibition of apoptosis by interacting with the pro-domain of pro-caspase-8/CASP8 and thus preventing its activation. This is Viral inhibitor of caspase-8-induced apoptosis (UL36) from Human cytomegalovirus (strain Merlin) (HHV-5).